A 331-amino-acid polypeptide reads, in one-letter code: UPF0194 membrane protein Ent638_1286 (331 aa).

A signal peptide spans 1–16 (MKKPVVVILAVVVLLA). Positions 107–208 (EEVAQAEAAV…LDLHDTTLIA (102 aa)) form a coiled coil.

It belongs to the UPF0194 family.

It localises to the periplasm. The sequence is that of UPF0194 membrane protein Ent638_1286 from Enterobacter sp. (strain 638).